Reading from the N-terminus, the 102-residue chain is Small ribosomal subunit protein uS10 (102 aa).

This sequence belongs to the universal ribosomal protein uS10 family. As to quaternary structure, part of the 30S ribosomal subunit.

Functionally, involved in the binding of tRNA to the ribosomes. The polypeptide is Small ribosomal subunit protein uS10 (Pelotomaculum thermopropionicum (strain DSM 13744 / JCM 10971 / SI)).